The chain runs to 210 residues: Guanylate kinase (210 aa).

The region spanning 6–186 is the Guanylate kinase-like domain; the sequence is GLLGIISAPS…ALIYLQSVIL (181 aa). ATP is bound at residue 13 to 20; that stretch reads APSGAGKS.

Belongs to the guanylate kinase family.

It localises to the cytoplasm. The enzyme catalyses GMP + ATP = GDP + ADP. In terms of biological role, essential for recycling GMP and indirectly, cGMP. The protein is Guanylate kinase of Blochmanniella floridana.